Here is a 392-residue protein sequence, read N- to C-terminus: ATP phosphoribosyltransferase regulatory subunit (392 aa).

Belongs to the class-II aminoacyl-tRNA synthetase family. HisZ subfamily. In terms of assembly, heteromultimer composed of HisG and HisZ subunits.

It localises to the cytoplasm. Its pathway is amino-acid biosynthesis; L-histidine biosynthesis; L-histidine from 5-phospho-alpha-D-ribose 1-diphosphate: step 1/9. In terms of biological role, required for the first step of histidine biosynthesis. May allow the feedback regulation of ATP phosphoribosyltransferase activity by histidine. In Listeria monocytogenes serotype 4b (strain F2365), this protein is ATP phosphoribosyltransferase regulatory subunit.